The chain runs to 1243 residues: Plasma membrane calcium-transporting ATPase 2 (1243 aa).

Positions 1 to 13 are enriched in polar residues; that stretch reads MGDMTNSDFYSKN. A disordered region spans residues 1-24; that stretch reads MGDMTNSDFYSKNQRNESSHGGEF. At 1–94 the chain is on the cytoplasmic side; that stretch reads MGDMTNSDFY…NFIPPKKPKT (94 aa). Position 18 is a phosphoserine (S18). A helical membrane pass occupies residues 95-115; sequence FLQLVWEALQDVTLIILEIAA. Residues 116-152 lie on the Extracellular side of the membrane; the sequence is IISLGLSFYHPPGEGNEGCATAQGGAEDEGEAEAGWI. A helical membrane pass occupies residues 153 to 173; the sequence is EGAAILLSVICVVLVTAFNDW. Residues 174 to 390 lie on the Cytoplasmic side of the membrane; the sequence is SKEKQFRGLQ…KEKSVLQGKL (217 aa). Residues 334–381 form a disordered region; the sequence is GKMQDGNVDASQSKAKQQDGAAAMEMQPLKSAEGGDADDRKKASMHKK. Residues 391–410 traverse the membrane as a helical segment; sequence TKLAVQIGKAGLVMSAITVI. Over 411 to 443 the chain is Extracellular; the sequence is ILVLYFTVDTFVVNKKPWLPECTPVYVQYFVKF. The helical transmembrane segment at 444–461 threads the bilayer; sequence FIIGVTVLVVAVPEGLPL. Topologically, residues 462–875 are cytoplasmic; sequence AVTISLAYSV…MWGRNVYDSI (414 aa). D499 functions as the 4-aspartylphosphate intermediate in the catalytic mechanism. Mg(2+) is bound by residues D820 and D824. A helical transmembrane segment spans residues 876-895; it reads SKFLQFQLTVNVVAVIVAFT. Residues 896 to 905 are Extracellular-facing; the sequence is GACITQDSPL. Residues 906–926 traverse the membrane as a helical segment; that stretch reads KAVQMLWVNLIMDTFASLALA. Over 927-946 the chain is Cytoplasmic; sequence TEPPTETLLLRKPYGRNKPL. A helical transmembrane segment spans residues 947–969; sequence ISRTMMKNILGHAVYQLALIFTL. At 970 to 987 the chain is on the extracellular side; that stretch reads LFVGEKMFQIDSGRNAPL. Residues 988–1009 form a helical membrane-spanning segment; the sequence is HSPPSEHYTIIFNTFVMMQLFN. The Cytoplasmic segment spans residues 1010 to 1028; it reads EINARKIHGERNVFDGIFR. Residues 1029–1050 traverse the membrane as a helical segment; sequence NPIFCTIVLGTFAIQIVIVQFG. Topologically, residues 1051–1060 are extracellular; sequence GKPFSCSPLQ. The chain crosses the membrane as a helical span at residues 1061 to 1082; it reads LDQWMWCIFIGLGELVWGQVIA. Over 1083–1243 the chain is Cytoplasmic; the sequence is TIPTSRLKFL…SPIHSLETSL (161 aa). Residues E1120, R1132, and L1134 each carry the phosphoserine modification. A calmodulin-binding subdomain A region spans residues 1123–1140; it reads LRRGQILWFRGLNRIQTQ. The residue at position 1139 (T1139) is a Phosphothreonine; by PKC. The calmodulin-binding subdomain B stretch occupies residues 1141–1150; that stretch reads IRVVKAFRSS. A phosphoserine mark is found at A1146, L1151, S1163, H1165, D1177, and S1178. Position 1188 is a phosphothreonine (T1188). A disordered region spans residues 1194 to 1243; that stretch reads AALKQNSSPPSSLNKNNSAIDSGINLTTDTSKSATSSSPGSPIHSLETSL. 2 stretches are compositionally biased toward low complexity: residues 1196–1211 and 1220–1234; these read LKQN…KNNS and TTDT…SPGS. Residue S1201 is modified to Phosphoserine; by PKA. S1211 carries the post-translational modification Phosphoserine.

This sequence belongs to the cation transport ATPase (P-type) (TC 3.A.3) family. Type IIB subfamily. In terms of assembly, interacts with PDZD11. As to expression, mainly expressed in brain cortex. Found in low levels in skeletal muscle, heart muscle, stomach, liver, kidney and lung. Isoforms containing segment B are found in brain cortex and at low levels in other tissues. Isoforms containing segments X and W are found at low levels in all tissues. Isoforms containing segment A and segment Z are found at low levels in skeletal muscle and heart muscle.

The protein resides in the cell membrane. The protein localises to the synapse. It localises to the apical cell membrane. Its subcellular location is the basolateral cell membrane. It carries out the reaction Ca(2+)(in) + ATP + H2O = Ca(2+)(out) + ADP + phosphate + H(+). Up-regulated by calmodulin which increases the affinity of the pump for Ca(2+) ions. Functionally, ATP-driven Ca(2+) ion pump involved in the maintenance of basal intracellular Ca(2+) levels in specialized cells of cerebellar circuit and vestibular and cochlear systems. Uses ATP as an energy source to transport cytosolic Ca(2+) ions across the plasma membrane to the extracellular compartment. Has fast activation and Ca(2+) clearance rate suited to control fast neuronal Ca(2+) dynamics. At parallel fiber to Purkinje neuron synapse, mediates presynaptic Ca(2+) efflux in response to climbing fiber-induced Ca(2+) rise. Provides for fast return of Ca(2+) concentrations back to their resting levels, ultimately contributing to long-term depression induction and motor learning. Plays an essential role in hearing and balance. In cochlear hair cells, shuttles Ca(2+) ions from stereocilia to the endolymph and dissipates Ca(2+) transients generated by the opening of the mechanoelectrical transduction channels. Regulates Ca(2+) levels in the vestibular system, where it contributes to the formation of otoconia. In non-excitable cells, regulates Ca(2+) signaling through spatial control of Ca(2+) ions extrusion and dissipation of Ca(2+) transients generated by store-operated channels. In lactating mammary gland, allows for the high content of Ca(2+) ions in the milk. This Homo sapiens (Human) protein is Plasma membrane calcium-transporting ATPase 2.